Reading from the N-terminus, the 234-residue chain is Large ribosomal subunit protein uL1 (234 aa).

The protein belongs to the universal ribosomal protein uL1 family. Part of the 50S ribosomal subunit.

Binds directly to 23S rRNA. The L1 stalk is quite mobile in the ribosome, and is involved in E site tRNA release. Its function is as follows. Protein L1 is also a translational repressor protein, it controls the translation of the L11 operon by binding to its mRNA. In terms of biological role, peptides originating from the N-terminal end of L1 have antibacterial activity against bacteria such as E.coli and B.megaterium and modest antifungal activities. Has no effect on H.pylori itself. Peptides are not hemolytic against mammalian cells. These peptides may be released in the stomach during altruistic lysis to kill other fast growing bacteria. The sequence is that of Large ribosomal subunit protein uL1 from Helicobacter pylori (strain ATCC 700392 / 26695) (Campylobacter pylori).